Here is a 479-residue protein sequence, read N- to C-terminus: MNQDSGCEGVGEVVRVMPAVVDVEFAHGGLPDILHALKSEKDYQGKQLVLEVAQHLGDGVVRCVAMGSTDGLSRGDKFINTGSPISVPVGRKTLGRVFDVLGEPIDGVGDVGADVEYHSIHAHAPKLSEQKVATEVLVTGIKVIDLLAPYLKGGKVGLFGGAGVGKTVLIMELISNIARAHKGFSVFAGVGERTREGNDLYREMVESGVINEDEREKSQAVLVYGQMNEPPGARMRVALSALTMAEYFRDAEGQDVLFFVDNVFRFTQSGSEVSALLGRVPSAVGYQPTLASEMGAMQERITSTHKGSITSVQAIYVPADDLTDPAPSTSFLHLDSTTVLSRQISELGIYPAVDPLDSTSQALSVDVVGAEHYEVAREVQRILQTYKSLQDIIAILGMDELSQEDKILVARARKIQRFLSQPFHVAEVFTGNPGVFVSLEDTVRSFKGLVEGQYDDLPEAAFYMVGGIDAAVEKAKALK.

Residue 160-167 (GGAGVGKT) participates in ATP binding.

Belongs to the ATPase alpha/beta chains family. As to quaternary structure, F-type ATPases have 2 components, CF(1) - the catalytic core - and CF(0) - the membrane proton channel. CF(1) has five subunits: alpha(3), beta(3), gamma(1), delta(1), epsilon(1). CF(0) has three main subunits: a(1), b(2) and c(9-12). The alpha and beta chains form an alternating ring which encloses part of the gamma chain. CF(1) is attached to CF(0) by a central stalk formed by the gamma and epsilon chains, while a peripheral stalk is formed by the delta and b chains.

The protein resides in the cell inner membrane. The enzyme catalyses ATP + H2O + 4 H(+)(in) = ADP + phosphate + 5 H(+)(out). Functionally, produces ATP from ADP in the presence of a proton gradient across the membrane. The catalytic sites are hosted primarily by the beta subunits. The polypeptide is ATP synthase subunit beta (Anaplasma phagocytophilum (strain HZ)).